A 274-amino-acid chain; its full sequence is NADPH-dependent 7-cyano-7-deazaguanine reductase (274 aa).

Substrate is bound at residue 81 to 83 (IES). 83-84 (SK) is an NADPH binding site. Cys-182 functions as the Thioimide intermediate in the catalytic mechanism. Catalysis depends on Asp-189, which acts as the Proton donor. 221–222 (HE) is a substrate binding site. 250–251 (RG) is a binding site for NADPH.

The protein belongs to the GTP cyclohydrolase I family. QueF type 2 subfamily. As to quaternary structure, homodimer.

It is found in the cytoplasm. The enzyme catalyses 7-aminomethyl-7-carbaguanine + 2 NADP(+) = 7-cyano-7-deazaguanine + 2 NADPH + 3 H(+). It functions in the pathway tRNA modification; tRNA-queuosine biosynthesis. Its function is as follows. Catalyzes the NADPH-dependent reduction of 7-cyano-7-deazaguanine (preQ0) to 7-aminomethyl-7-deazaguanine (preQ1). This is NADPH-dependent 7-cyano-7-deazaguanine reductase from Hahella chejuensis (strain KCTC 2396).